The following is a 104-amino-acid chain: Large ribosomal subunit protein uL23 (104 aa).

It belongs to the universal ribosomal protein uL23 family. In terms of assembly, part of the 50S ribosomal subunit. Contacts protein L29, and trigger factor when it is bound to the ribosome.

In terms of biological role, one of the early assembly proteins it binds 23S rRNA. One of the proteins that surrounds the polypeptide exit tunnel on the outside of the ribosome. Forms the main docking site for trigger factor binding to the ribosome. This is Large ribosomal subunit protein uL23 from Nostoc punctiforme (strain ATCC 29133 / PCC 73102).